Here is a 155-residue protein sequence, read N- to C-terminus: Aspartate carbamoyltransferase regulatory chain (155 aa).

Zn(2+) is bound by residues Cys-113, Cys-118, Cys-139, and Cys-142.

Belongs to the PyrI family. In terms of assembly, contains catalytic and regulatory chains. The cofactor is Zn(2+).

Functionally, involved in allosteric regulation of aspartate carbamoyltransferase. This Methanosphaerula palustris (strain ATCC BAA-1556 / DSM 19958 / E1-9c) protein is Aspartate carbamoyltransferase regulatory chain.